The chain runs to 689 residues: Glycine--tRNA ligase beta subunit (689 aa).

The protein belongs to the class-II aminoacyl-tRNA synthetase family. Tetramer of two alpha and two beta subunits.

The protein localises to the cytoplasm. The enzyme catalyses tRNA(Gly) + glycine + ATP = glycyl-tRNA(Gly) + AMP + diphosphate. This chain is Glycine--tRNA ligase beta subunit, found in Shewanella piezotolerans (strain WP3 / JCM 13877).